Consider the following 750-residue polypeptide: Photosystem I P700 chlorophyll a apoprotein A1 (750 aa).

Helical transmembrane passes span 70–93, 156–179, 195–219, 291–309, 346–369, 385–411, 433–455, and 531–549; these read VFSA…FHGA, LYCT…FHYH, LNHH…HVSL, IVHH…GHMY, WHAQ…HHMY, LSLF…IFMV, AIIS…LYIH, and FLVH…LILL. Residues Cys-573 and Cys-582 each contribute to the [4Fe-4S] cluster site. 2 helical membrane-spanning segments follow: residues 589–610 and 664–686; these read HVFL…HFSW and LSAY…MFLF. His-675 lines the chlorophyll a' pocket. Residues Met-683 and Tyr-691 each contribute to the chlorophyll a site. A phylloquinone-binding site is contributed by Trp-692. Residues 724–744 form a helical membrane-spanning segment; the sequence is AVGVTHYLLGGIATTWAFFLA.

The protein belongs to the PsaA/PsaB family. In terms of assembly, the PsaA/B heterodimer binds the P700 chlorophyll special pair and subsequent electron acceptors. PSI consists of a core antenna complex that captures photons, and an electron transfer chain that converts photonic excitation into a charge separation. The eukaryotic PSI reaction center is composed of at least 11 subunits. P700 is a chlorophyll a/chlorophyll a' dimer, A0 is one or more chlorophyll a, A1 is one or both phylloquinones and FX is a shared 4Fe-4S iron-sulfur center. serves as cofactor.

The protein resides in the plastid. It is found in the chloroplast thylakoid membrane. The enzyme catalyses reduced [plastocyanin] + hnu + oxidized [2Fe-2S]-[ferredoxin] = oxidized [plastocyanin] + reduced [2Fe-2S]-[ferredoxin]. PsaA and PsaB bind P700, the primary electron donor of photosystem I (PSI), as well as the electron acceptors A0, A1 and FX. PSI is a plastocyanin-ferredoxin oxidoreductase, converting photonic excitation into a charge separation, which transfers an electron from the donor P700 chlorophyll pair to the spectroscopically characterized acceptors A0, A1, FX, FA and FB in turn. Oxidized P700 is reduced on the lumenal side of the thylakoid membrane by plastocyanin. The chain is Photosystem I P700 chlorophyll a apoprotein A1 from Piper cenocladum (Ant piper).